Reading from the N-terminus, the 1004-residue chain is Bifunctional glutamine synthetase adenylyltransferase/adenylyl-removing enzyme (1004 aa).

The adenylyl removase stretch occupies residues 1–496; the sequence is MVRPPSARSA…LHAKLFYRPL (496 aa). The tract at residues 502 to 1004 is adenylyl transferase; that stretch reads RMDPDALRLS…RAVVERVFGS (503 aa).

The protein belongs to the GlnE family. The cofactor is Mg(2+).

It carries out the reaction [glutamine synthetase]-O(4)-(5'-adenylyl)-L-tyrosine + phosphate = [glutamine synthetase]-L-tyrosine + ADP. The catalysed reaction is [glutamine synthetase]-L-tyrosine + ATP = [glutamine synthetase]-O(4)-(5'-adenylyl)-L-tyrosine + diphosphate. Its function is as follows. Involved in the regulation of glutamine synthetase GlnA, a key enzyme in the process to assimilate ammonia. When cellular nitrogen levels are high, the C-terminal adenylyl transferase (AT) inactivates GlnA by covalent transfer of an adenylyl group from ATP to specific tyrosine residue of GlnA, thus reducing its activity. Conversely, when nitrogen levels are low, the N-terminal adenylyl removase (AR) activates GlnA by removing the adenylyl group by phosphorolysis, increasing its activity. The regulatory region of GlnE binds the signal transduction protein PII (GlnB) which indicates the nitrogen status of the cell. The sequence is that of Bifunctional glutamine synthetase adenylyltransferase/adenylyl-removing enzyme from Nocardia farcinica (strain IFM 10152).